The primary structure comprises 326 residues: Cytosolic sulfotransferase 7 (326 aa).

3'-phosphoadenylyl sulfate is bound at residue 72-77 (KSGTTW). The active-site Proton acceptor is the histidine 138. 3'-phosphoadenylyl sulfate is bound by residues arginine 160, serine 168, tyrosine 226, and 292-294 (RKG).

The protein belongs to the sulfotransferase 1 family.

It localises to the cytoplasm. Sulfotransferase that utilizes 3'-phospho-5'-adenylyl sulfate (PAPS) as sulfonate donor. The polypeptide is Cytosolic sulfotransferase 7 (SOT7) (Arabidopsis thaliana (Mouse-ear cress)).